The chain runs to 658 residues: UvrABC system protein B (658 aa).

The region spanning 25–182 (ESLNGGNSHQ…KGLVDIQYSR (158 aa)) is the Helicase ATP-binding domain. 38-45 (GVTGSGKT) lines the ATP pocket. Positions 91-114 (YYDYYQPEAYIPQTDTYIEKDASI) match the Beta-hairpin motif. Positions 429 to 595 (QIDDLYSEIN…TVQKKVHDVI (167 aa)) constitute a Helicase C-terminal domain. The UVR domain occupies 622 to 657 (KELIAKLQEEMKQAAKELEFEKAAELRDLIMELKTA).

It belongs to the UvrB family. Forms a heterotetramer with UvrA during the search for lesions. Interacts with UvrC in an incision complex.

The protein resides in the cytoplasm. In terms of biological role, the UvrABC repair system catalyzes the recognition and processing of DNA lesions. A damage recognition complex composed of 2 UvrA and 2 UvrB subunits scans DNA for abnormalities. Upon binding of the UvrA(2)B(2) complex to a putative damaged site, the DNA wraps around one UvrB monomer. DNA wrap is dependent on ATP binding by UvrB and probably causes local melting of the DNA helix, facilitating insertion of UvrB beta-hairpin between the DNA strands. Then UvrB probes one DNA strand for the presence of a lesion. If a lesion is found the UvrA subunits dissociate and the UvrB-DNA preincision complex is formed. This complex is subsequently bound by UvrC and the second UvrB is released. If no lesion is found, the DNA wraps around the other UvrB subunit that will check the other stand for damage. The polypeptide is UvrABC system protein B (Natranaerobius thermophilus (strain ATCC BAA-1301 / DSM 18059 / JW/NM-WN-LF)).